The chain runs to 432 residues: 23S rRNA (uracil(1939)-C(5))-methyltransferase RlmD (432 aa).

The TRAM domain occupies 10–68; sequence RVTTREIITVTTDGLDAFGQGVARHHGKALFIAGLLPGERAEVVLSEDKKQFARGDVKK. Residues Cys81, Cys87, Cys90, and Cys162 each contribute to the [4Fe-4S] cluster site. S-adenosyl-L-methionine contacts are provided by Gln265, Phe294, Asn299, Glu315, Asn342, and Asp363. Residue Cys389 is the Nucleophile of the active site.

Belongs to the class I-like SAM-binding methyltransferase superfamily. RNA M5U methyltransferase family. RlmD subfamily.

The catalysed reaction is uridine(1939) in 23S rRNA + S-adenosyl-L-methionine = 5-methyluridine(1939) in 23S rRNA + S-adenosyl-L-homocysteine + H(+). In terms of biological role, catalyzes the formation of 5-methyl-uridine at position 1939 (m5U1939) in 23S rRNA. This Cronobacter sakazakii (strain ATCC BAA-894) (Enterobacter sakazakii) protein is 23S rRNA (uracil(1939)-C(5))-methyltransferase RlmD.